Reading from the N-terminus, the 759-residue chain is MPAPKLTEKFASSKSTQKTTNYSSIEAKSVKTSADQAYIYQEPSATKKILYSIATWLLYNIFHCFFREIRGRGSFKVPQQGPVIFVAAPHANQFVDPVILMGEVKKSVNRRVSFLIAESSLKQPPIGFLASFFMAIGVVRPQDNLKPAEGTIRVDPTDYKRVIGHDTHFLTDCMPKGLIGLPKSMGFGEIQSIESDTSLTLRKEFKMAKPEIKTALLTGTTYKYAAKVDQSCVYHRVFEHLAHNNCIGIFPEGGSHDRTNLLPLKAGVAIMALGCMDKHPDVNVKIVPCGMNYFHPHKFRSRAVVEFGDPIEIPKELVAKYHNPETNRDAVKELLDTISKGLQSVTVTCSDYETLMVVQTIRRLYMTQFSTKLPLPLIVEMNRRMVKGYEFYRNDPKIADLTKDIMAYNAALRHYNLPDHLVEEAKVNFAKNLGLVFFRSIGLCILFSLAMPGIIMFSPVFILAKRISQEKARTALSKSTVKIKANDVIATWKILIGMGFAPLLYIFWSVLITYYLRHKPWNKIYVFSGSYISCVIVTYSALIVGDIGMDGFKSLRPLVLSLTSPKGLQKLQKDRRNLAERIIEVVNNFGSELFPDFDSAALREEFDVIDEEEEDRKTSELNRRKMLRKQKIKRQEKDSSSPIISQRDNHDAYEHHNQDSDGVSLVNSDNSLSNIPLFSSTFHRKSESSLASTSVAPSSSSEFEVENEILEEKNGLASKIAQAVLNKRIGENTAREEEEEEEEEEEEEEEEEEGKEGDA.

Over 1–48 the chain is Lumenal; the sequence is MPAPKLTEKFASSKSTQKTTNYSSIEAKSVKTSADQAYIYQEPSATKK. A helical membrane pass occupies residues 49–69; the sequence is ILYSIATWLLYNIFHCFFREI. Topologically, residues 70–434 are cytoplasmic; it reads RGRGSFKVPQ…AKVNFAKNLG (365 aa). The short motif at 414–419 is the HXXXXD motif element; it reads HYNLPD. Residues 435 to 449 form a helical membrane-spanning segment; that stretch reads LVFFRSIGLCILFSL. A topological domain (lumenal) is located at residue alanine 450. A helical transmembrane segment spans residues 451–465; that stretch reads MPGIIMFSPVFILAK. Over 466 to 493 the chain is Cytoplasmic; sequence RISQEKARTALSKSTVKIKANDVIATWK. The helical transmembrane segment at 494-514 threads the bilayer; that stretch reads ILIGMGFAPLLYIFWSVLITY. The Lumenal portion of the chain corresponds to 515 to 523; that stretch reads YLRHKPWNK. Residues 524–544 form a helical membrane-spanning segment; that stretch reads IYVFSGSYISCVIVTYSALIV. Residues 545-759 lie on the Cytoplasmic side of the membrane; that stretch reads GDIGMDGFKS…EEEEGKEGDA (215 aa). Disordered regions lie at residues 613-667, 684-705, and 729-759; these read EEDR…SLVN, RKSE…EFEV, and IGEN…EGDA. The span at 647–659 shows a compositional bias: basic and acidic residues; it reads RDNHDAYEHHNQD. Residues 688–702 are compositionally biased toward low complexity; sequence SSLASTSVAPSSSSE. The segment covering 736 to 759 has biased composition (acidic residues); sequence EEEEEEEEEEEEEEEEEEGKEGDA.

Belongs to the GPAT/DAPAT family.

It localises to the endoplasmic reticulum membrane. It catalyses the reaction sn-glycerol 3-phosphate + an acyl-CoA = a 1-acyl-sn-glycero-3-phosphate + CoA. The catalysed reaction is dihydroxyacetone phosphate + an acyl-CoA = a 1-acylglycerone 3-phosphate + CoA. It carries out the reaction sn-glycerol 3-phosphate + hexadecanoyl-CoA = 1-hexadecanoyl-sn-glycero-3-phosphate + CoA. The enzyme catalyses (9Z)-hexadecenoyl-CoA + sn-glycerol 3-phosphate = 1-(9Z-hexadecenoyl)-sn-glycero-3-phosphate + CoA. It catalyses the reaction sn-glycerol 3-phosphate + octadecanoyl-CoA = 1-octadecanoyl-sn-glycero-3-phosphate + CoA. The catalysed reaction is sn-glycerol 3-phosphate + (9Z)-octadecenoyl-CoA = 1-(9Z-octadecenoyl)-sn-glycero-3-phosphate + CoA. Its pathway is phospholipid metabolism; CDP-diacylglycerol biosynthesis; CDP-diacylglycerol from sn-glycerol 3-phosphate: step 1/3. Dual substrate-specific glycerol-3-phosphate/dihydroxyacetone phosphate sn-1 acyltransferase, catalyzing the first and committed reaction in the de novo synthesis of glycerophospholipids and triacylglycerols (TAGs). Prefers Gly-3-P over dihydroxyacetone phosphate and has a marked preference for 16-carbon fatty acyl chains. Transfers a fatty acid from fatty acyl-CoA to the sn-1 position of glycerol-3-phosphate to produce lysophosphatidic acid (LysoPA). These lipids not only are precursors of glycerolipids, but also are dynamic components of signal transduction systems that control cell physiology. SCT1 is the primary supplier of diacylglycerols (DAG), used mainly in TAG synthesis and phosphatidylcholine (PC) synthesis through the CDP-choline pathway. Regulates fatty acid desaturation, that is, the ratio of unsaturated versus saturated fatty acyl chains, by competing with the desaturase OLE1 for the common substrate C16:0-CoA. Sequesters C16:0-CoA into lipids, thereby shielding it from desaturation by OLE1. The chain is Glycerol-3-phosphate O-acyltransferase 1 from Saccharomyces cerevisiae (strain ATCC 204508 / S288c) (Baker's yeast).